The primary structure comprises 300 residues: D-alanine--D-alanine ligase (300 aa).

The region spanning K99–K293 is the ATP-grasp domain. I126–T181 lines the ATP pocket. 3 residues coordinate Mg(2+): D248, E260, and N262.

It belongs to the D-alanine--D-alanine ligase family. It depends on Mg(2+) as a cofactor. Mn(2+) is required as a cofactor.

Its subcellular location is the cytoplasm. It carries out the reaction 2 D-alanine + ATP = D-alanyl-D-alanine + ADP + phosphate + H(+). Its pathway is cell wall biogenesis; peptidoglycan biosynthesis. Functionally, cell wall formation. This Clostridium botulinum (strain ATCC 19397 / Type A) protein is D-alanine--D-alanine ligase.